The chain runs to 521 residues: Bifunctional purine biosynthesis protein PurH (521 aa).

Residues 1-147 (MAKITRALIS…KNNADVTVLV (147 aa)) form the MGS-like domain.

This sequence belongs to the PurH family.

It catalyses the reaction (6R)-10-formyltetrahydrofolate + 5-amino-1-(5-phospho-beta-D-ribosyl)imidazole-4-carboxamide = 5-formamido-1-(5-phospho-D-ribosyl)imidazole-4-carboxamide + (6S)-5,6,7,8-tetrahydrofolate. The enzyme catalyses IMP + H2O = 5-formamido-1-(5-phospho-D-ribosyl)imidazole-4-carboxamide. Its pathway is purine metabolism; IMP biosynthesis via de novo pathway; 5-formamido-1-(5-phospho-D-ribosyl)imidazole-4-carboxamide from 5-amino-1-(5-phospho-D-ribosyl)imidazole-4-carboxamide (10-formyl THF route): step 1/1. It functions in the pathway purine metabolism; IMP biosynthesis via de novo pathway; IMP from 5-formamido-1-(5-phospho-D-ribosyl)imidazole-4-carboxamide: step 1/1. The polypeptide is Bifunctional purine biosynthesis protein PurH (Geobacter sulfurreducens (strain ATCC 51573 / DSM 12127 / PCA)).